The primary structure comprises 560 residues: Membrane protein insertase YidC (560 aa).

A helical membrane pass occupies residues 1 to 21 (MDIKRTILIAALAVVSYVMVL). Residues 42–66 (VAPGLPDGVPAGNNGASADVPSANA) are disordered. 5 consecutive transmembrane segments (helical) span residues 341–361 (LELT…FWLL), 367–387 (LLGN…GLFF), 437–457 (LGGC…YWVL), 468–488 (WILW…PIIM), and 515–535 (PIIF…YWVV).

It belongs to the OXA1/ALB3/YidC family. Type 1 subfamily. In terms of assembly, interacts with the Sec translocase complex via SecD. Specifically interacts with transmembrane segments of nascent integral membrane proteins during membrane integration.

It localises to the cell inner membrane. Functionally, required for the insertion and/or proper folding and/or complex formation of integral membrane proteins into the membrane. Involved in integration of membrane proteins that insert both dependently and independently of the Sec translocase complex, as well as at least some lipoproteins. Aids folding of multispanning membrane proteins. The polypeptide is Membrane protein insertase YidC (Pseudomonas putida (strain ATCC 47054 / DSM 6125 / CFBP 8728 / NCIMB 11950 / KT2440)).